We begin with the raw amino-acid sequence, 448 residues long: MKSLSLLLAVALGLATAVSAGPAVIECWFVEDASGKGLAKRPGALLLRQGPGEPPPRPDLDPELYLSVHDPAGALQAAFRRYPRGAPAPHCEMSRFVPLPASAKWASGLTPAQNCPRALDGAWLMVSISSPVLSLSSLLRPQPEPQQEPVLITMATVVLTVLTHTPAPRVRLGQDALLDLSFAYMPPTSEAASSLAPGPPPFGLEWRRQHLGKGHLLLAATPGLNGQMPAAQEGAVAFAAWDDDEPWGPWTGNGTFWLPTVQPFQEGTYLATIHLPYLQGQVTLELAVYKPPKVSLMPATLARAAPGEAPPELLCLVSHFYPSGGLEVEWELRGGPGGRSQKAEGQRWLSALRHHSDGSVSLSGHLQPPPVTTEQHGARYACRIHHPSLPASGRSAEVTLEVAGLSGPSLEDSVGLFLSAFLLLGLFKALGWAAVYLSTCKDSKKKAE.

The signal sequence occupies residues 1–20 (MKSLSLLLAVALGLATAVSA). The Lumenal portion of the chain corresponds to 21 to 414 (GPAVIECWFV…LSGPSLEDSV (394 aa)). Residues cysteine 27 and cysteine 91 are joined by a disulfide bond. Residue asparagine 253 is glycosylated (N-linked (GlcNAc...) asparagine). The 108-residue stretch at 292–399 (PKVSLMPATL…PASGRSAEVT (108 aa)) folds into the Ig-like C1-type domain. Cysteines 315 and 382 form a disulfide. Residues 415–435 (GLFLSAFLLLGLFKALGWAAV) form a helical membrane-spanning segment. Residues 436 to 448 (YLSTCKDSKKKAE) are Cytoplasmic-facing.

As to quaternary structure, heterodimer with PDIA3; disulfide-linked. Obligatory mediator for the interaction between newly assembled MHC class I molecules, calreticulin, PDIA3 and TAP. Up to 4 MHC class I/tapasin complexes bind to 1 TAP. Interacts with HLA-G-B2M complex; this interaction is required for loading of high affinity peptides. On its own or as part of MHC class I peptide loading complex, interacts with ligand-free MR1 or MR1-B2M complex, providing for stable MR1 pools ready for metabolite antigen processing. As to expression, neutrophils, mostly in fully differentiated cells.

The protein localises to the endoplasmic reticulum membrane. In terms of biological role, involved in the association of MHC class I with transporter associated with antigen processing (TAP) and in the assembly of MHC class I with peptide (peptide loading). The sequence is that of Tapasin from Homo sapiens (Human).